The primary structure comprises 381 residues: Cytochrome b (381 aa).

4 helical membrane-spanning segments follow: residues 34–54 (FGSL…FLAM), 78–99 (WLIR…YLHI), 114–134 (WNTG…GYVL), and 179–199 (FFTF…VHLL). Heme b is bound by residues His-84 and His-98. Heme b contacts are provided by His-183 and His-197. His-202 lines the a ubiquinone pocket. Helical transmembrane passes span 227 to 247 (YKDL…TLFS), 289 to 309 (LGGV…PTLH), 321 to 341 (LTQI…WIGG), and 348 to 368 (FIII…LLMP).

The protein belongs to the cytochrome b family. As to quaternary structure, the cytochrome bc1 complex contains 3 respiratory subunits (MT-CYB, CYC1 and UQCRFS1), 2 core proteins (UQCRC1 and UQCRC2) and probably 6 low-molecular weight proteins. Heme b is required as a cofactor.

It localises to the mitochondrion inner membrane. Functionally, component of the ubiquinol-cytochrome c reductase complex (complex III or cytochrome b-c1 complex) that is part of the mitochondrial respiratory chain. The b-c1 complex mediates electron transfer from ubiquinol to cytochrome c. Contributes to the generation of a proton gradient across the mitochondrial membrane that is then used for ATP synthesis. This chain is Cytochrome b (MT-CYB), found in Chelonia mydas (Green sea-turtle).